Reading from the N-terminus, the 347-residue chain is MRPIVLMGHERPLTQVKYNREGDLLFTCSKDISASVWYSNNGERLGTLDGHMGSIWSIDSDHTSLYCVTGSADYTIKVWTLMNGQCVQTWNCPVPVKRVEFSPCGKYILAILDNVMKKPGSIEIYEVKRNPETNEITEFVEEPIHSIVTHEGLDAASVAGWSGEGKYIIAGHKDGKISKYDTQDGYKLVESQQVHKDSVSDLQFSPDRTYFITCSRDSNAHIIDIETFKVLKTYETDSPLNSAAITPLKEFVILGGGQDASEVTTTSASEGKFEARIYHKVFEEEIGRVVGHFGPLNSIAVSPQGTSYTSGGEEGLVRLHHFEKSYFDFKYDVEKAADAKEHISHEA.

5 WD repeats span residues 8 to 49 (GHER…GTLD), 51 to 89 (HMGS…CVQT), 149 to 190 (THEG…KLVE), 194 to 233 (VHKD…VLKT), and 291 to 330 (GHFG…FDFK).

This sequence belongs to the eIF-3 subunit I family. As to quaternary structure, component of the eukaryotic translation initiation factor 3 (eIF-3) complex.

It localises to the cytoplasm. In terms of biological role, component of the eukaryotic translation initiation factor 3 (eIF-3) complex, which is involved in protein synthesis of a specialized repertoire of mRNAs and, together with other initiation factors, stimulates binding of mRNA and methionyl-tRNAi to the 40S ribosome. The eIF-3 complex specifically targets and initiates translation of a subset of mRNAs involved in cell proliferation. The polypeptide is Eukaryotic translation initiation factor 3 subunit I (Candida glabrata (strain ATCC 2001 / BCRC 20586 / JCM 3761 / NBRC 0622 / NRRL Y-65 / CBS 138) (Yeast)).